Reading from the N-terminus, the 1050-residue chain is Bifunctional glutamine synthetase adenylyltransferase/adenylyl-removing enzyme (1050 aa).

Positions 1–531 (MTDPLIHTRK…LHSQLFYRPL (531 aa)) are adenylyl removase. Residues 537 to 1050 (NLSVDAMKLS…LDSVEARREL (514 aa)) are adenylyl transferase.

This sequence belongs to the GlnE family. The cofactor is Mg(2+).

It carries out the reaction [glutamine synthetase]-O(4)-(5'-adenylyl)-L-tyrosine + phosphate = [glutamine synthetase]-L-tyrosine + ADP. The catalysed reaction is [glutamine synthetase]-L-tyrosine + ATP = [glutamine synthetase]-O(4)-(5'-adenylyl)-L-tyrosine + diphosphate. Its function is as follows. Involved in the regulation of glutamine synthetase GlnA, a key enzyme in the process to assimilate ammonia. When cellular nitrogen levels are high, the C-terminal adenylyl transferase (AT) inactivates GlnA by covalent transfer of an adenylyl group from ATP to specific tyrosine residue of GlnA, thus reducing its activity. Conversely, when nitrogen levels are low, the N-terminal adenylyl removase (AR) activates GlnA by removing the adenylyl group by phosphorolysis, increasing its activity. The regulatory region of GlnE binds the signal transduction protein PII (GlnB) which indicates the nitrogen status of the cell. This is Bifunctional glutamine synthetase adenylyltransferase/adenylyl-removing enzyme from Corynebacterium efficiens (strain DSM 44549 / YS-314 / AJ 12310 / JCM 11189 / NBRC 100395).